Consider the following 177-residue polypeptide: Small ribosomal subunit protein uS5 (177 aa).

The 64-residue stretch at 21-84 folds into the S5 DRBM domain; that stretch reads LKEKMVSVNR…DEARQRMVRV (64 aa).

The protein belongs to the universal ribosomal protein uS5 family. Part of the 30S ribosomal subunit. Contacts proteins S4 and S8.

Functionally, with S4 and S12 plays an important role in translational accuracy. Its function is as follows. Located at the back of the 30S subunit body where it stabilizes the conformation of the head with respect to the body. This Nitrosomonas europaea (strain ATCC 19718 / CIP 103999 / KCTC 2705 / NBRC 14298) protein is Small ribosomal subunit protein uS5.